Consider the following 156-residue polypeptide: Xanthocillin biosynthesis cluster protein D (156 aa).

N-linked (GlcNAc...) asparagine glycans are attached at residues Asn-107 and Asn-120. Residues 131–153 (IHLNAIALVATVWYGFTLSSSLL) traverse the membrane as a helical segment.

It is found in the membrane. It functions in the pathway secondary metabolite biosynthesis. Functionally, part of the gene cluster that mediates the biosynthesis of the isocyanide xanthocillin and its derivatives. The first step of the pathway consists in the conversion of tyrosine into a vinyl-isonitrile intermediate by the isocyanide synthase xanB. Subsequent oxidative dimerization of this intermediate to form xanthocillin may involve the cytochrome P450 monooxygenase xanG, whose expression is coregulated with that of XanB. Xanthocillin can be further modified by the isonitrile hydratase-like protein xanA which introduces N-formyl groups and the methyltransferase xanE which introduces methyl groups, leading to the production of several derivatives including fumiformamide. Finally, fumiformamide can be subject to both oxidative and reductive cyclization to yield melanocins E and F, respectively. This Aspergillus fumigatus (strain ATCC MYA-4609 / CBS 101355 / FGSC A1100 / Af293) (Neosartorya fumigata) protein is Xanthocillin biosynthesis cluster protein D.